We begin with the raw amino-acid sequence, 1019 residues long: Mediator of replication checkpoint protein 1 (1019 aa).

Disordered stretches follow at residues 1 to 33 (MASL…LDTP), 105 to 143 (QGGK…DRNS), 166 to 202 (NSAT…SDRK), 261 to 290 (EEEA…IVNS), 443 to 683 (IQGE…SKTF), and 965 to 1019 (TQRP…SDFD). Over residues 17–30 (SDEASINDDQEDIL) the composition is skewed to acidic residues. Acidic residues predominate over residues 177 to 191 (LDSESADDSDLADES). Basic and acidic residues-rich tracts occupy residues 192–202 (ELSKKYTSDRK), 271–281 (NVEKEEPKPSV), and 454–468 (LERA…RQLE). The span at 476 to 486 (DEGELNDEEEV) shows a compositional bias: acidic residues. Positions 487–503 (ISSSNTPSTKAKTTNKV) are enriched in polar residues. Residues 556 to 580 (MIRDSFDRLSSESIKDSQKTEELHD) show a composition bias toward basic and acidic residues. Polar residues-rich tracts occupy residues 590–607 (QSTS…SQLT) and 630–658 (NTSS…IDSV). At S604 the chain carries Phosphoserine. T645 bears the Phosphothreonine mark. Positions 671-681 (EERRESRRDSK) are enriched in basic and acidic residues.

As to quaternary structure, interacts with cds1. Phosphorylated by rad3 and tel1.

The protein resides in the nucleus. Functionally, component of the replisome and is required for rad3-dependent activation of the checkpoint kinase cds1 in response to replication fork arrest. Phosphorylation allows it to mediate the activation of cds1. The chain is Mediator of replication checkpoint protein 1 (mrc1) from Schizosaccharomyces pombe (strain 972 / ATCC 24843) (Fission yeast).